We begin with the raw amino-acid sequence, 169 residues long: Regulator of sigma D (169 aa).

This sequence belongs to the Rsd/AlgQ family. Interacts with RpoD.

It localises to the cytoplasm. Binds RpoD and negatively regulates RpoD-mediated transcription activation by preventing the interaction between the primary sigma factor RpoD with the catalytic core of the RNA polymerase and with promoter DNA. May be involved in replacement of the RNA polymerase sigma subunit from RpoD to RpoS during the transition from exponential growth to the stationary phase. The polypeptide is Regulator of sigma D (Yersinia pestis).